Reading from the N-terminus, the 198-residue chain is tRNA (pseudouridine(54)-N(1))-methyltransferase (198 aa).

Leucine 134 and glycine 155 together coordinate S-adenosyl-L-methionine.

Belongs to the methyltransferase superfamily. TrmY family. As to quaternary structure, homodimer.

It is found in the cytoplasm. The catalysed reaction is pseudouridine(54) in tRNA + S-adenosyl-L-methionine = N(1)-methylpseudouridine(54) in tRNA + S-adenosyl-L-homocysteine + H(+). Specifically catalyzes the N1-methylation of pseudouridine at position 54 (Psi54) in tRNAs. The polypeptide is tRNA (pseudouridine(54)-N(1))-methyltransferase (Thermococcus kodakarensis (strain ATCC BAA-918 / JCM 12380 / KOD1) (Pyrococcus kodakaraensis (strain KOD1))).